The primary structure comprises 345 residues: Anthranilate phosphoribosyltransferase (345 aa).

5-phospho-alpha-D-ribose 1-diphosphate-binding positions include glycine 84, 87–88 (GD), threonine 92, 94–97 (NIST), 112–120 (KHGNRSVSS), and serine 124. An anthranilate-binding site is contributed by glycine 84. Residue serine 96 participates in Mg(2+) binding. Asparagine 115 is a binding site for anthranilate. Position 170 (arginine 170) interacts with anthranilate. Aspartate 229 and glutamate 230 together coordinate Mg(2+).

This sequence belongs to the anthranilate phosphoribosyltransferase family. In terms of assembly, homodimer. Mg(2+) serves as cofactor.

It catalyses the reaction N-(5-phospho-beta-D-ribosyl)anthranilate + diphosphate = 5-phospho-alpha-D-ribose 1-diphosphate + anthranilate. Its pathway is amino-acid biosynthesis; L-tryptophan biosynthesis; L-tryptophan from chorismate: step 2/5. Catalyzes the transfer of the phosphoribosyl group of 5-phosphorylribose-1-pyrophosphate (PRPP) to anthranilate to yield N-(5'-phosphoribosyl)-anthranilate (PRA). The protein is Anthranilate phosphoribosyltransferase of Xanthomonas euvesicatoria pv. vesicatoria (strain 85-10) (Xanthomonas campestris pv. vesicatoria).